Reading from the N-terminus, the 182-residue chain is Nucleoid-associated protein At2g24020, chloroplastic (182 aa).

Residues 1-48 (MASMAATTNFTKSMLFPFSHVSGNASLNSQRRTWPKQYKSKNGYRSLR) constitute a chloroplast transit peptide.

Belongs to the YbaB/EbfC family. In terms of assembly, homodimer. Interacts with ALB3 and ALB4.

Its subcellular location is the plastid. It localises to the chloroplast stroma. Functionally, participates with ALB4 in thylakoid protein targeting. May function with specific subset of thylakoidal proteins. Binds to DNA and alters its conformation. May be involved in regulation of gene expression, nucleoid organization and DNA protection. This Arabidopsis thaliana (Mouse-ear cress) protein is Nucleoid-associated protein At2g24020, chloroplastic.